The sequence spans 199 residues: Small ribosomal subunit protein eS6 (199 aa).

The span at Lys-172 to Ala-183 shows a compositional bias: basic and acidic residues. Residues Lys-172–Ala-199 are disordered.

The protein belongs to the eukaryotic ribosomal protein eS6 family. Ribosomal protein S6 is the major substrate of protein kinases in eukaryote ribosomes.

Component of the 40S small ribosomal subunit. Plays an important role in controlling cell growth and proliferation through the selective translation of particular classes of mRNA. The chain is Small ribosomal subunit protein eS6 (RPS6) from Nicotiana tabacum (Common tobacco).